The following is a 372-amino-acid chain: MEYEGYNDSSIYGEEYSDGSDYIVDLEEAGPLEAKVAEVFLVVIYSLVCFLGILGNGLVIVIATFKMKKTVNTVWFVNLAVADFLFNIFLPIHITYAAMDYHWVFGKAMCKISSFLLSHNMYTSVFLLTVISFDRCISVLLPVWSQNHRSVRLAYMTCVVVWVLAFFLSSPSLVFRDTVSTSHGKITCFNNFSLAAPEPFSHSTHPRTDPVGYSRHVAVTVTRFLCGFLIPVFIITACYLTIVFKLQRNRLAKTKKPFKIIITIIITFFLCWCPYHTLYLLELHHTAVPASVFSLGLPLATAVAIANSCMNPILYVFMGHDFKKFKVALFSRLVNALSEDTGPSSYPSHRSFTKMSSLIEKASVNEKETSTL.

Residues 1 to 39 (MEYEGYNDSSIYGEEYSDGSDYIVDLEEAGPLEAKVAEV) are Extracellular-facing. An N-linked (GlcNAc...) asparagine glycan is attached at Asn7. The helical transmembrane segment at 40–62 (FLVVIYSLVCFLGILGNGLVIVI) threads the bilayer. The Cytoplasmic portion of the chain corresponds to 63 to 73 (ATFKMKKTVNT). The helical transmembrane segment at 74 to 95 (VWFVNLAVADFLFNIFLPIHIT) threads the bilayer. The Extracellular segment spans residues 96–112 (YAAMDYHWVFGKAMCKI). The cysteines at positions 110 and 188 are disulfide-linked. Residues 113–133 (SSFLLSHNMYTSVFLLTVISF) form a helical membrane-spanning segment. The Cytoplasmic segment spans residues 134 to 152 (DRCISVLLPVWSQNHRSVR). A helical transmembrane segment spans residues 153-174 (LAYMTCVVVWVLAFFLSSPSLV). The Extracellular portion of the chain corresponds to 175 to 223 (FRDTVSTSHGKITCFNNFSLAAPEPFSHSTHPRTDPVGYSRHVAVTVTR). The N-linked (GlcNAc...) asparagine glycan is linked to Asn191. The chain crosses the membrane as a helical span at residues 224–244 (FLCGFLIPVFIITACYLTIVF). Topologically, residues 245–260 (KLQRNRLAKTKKPFKI) are cytoplasmic. A helical membrane pass occupies residues 261–281 (IITIIITFFLCWCPYHTLYLL). Topologically, residues 282–299 (ELHHTAVPASVFSLGLPL) are extracellular. A helical transmembrane segment spans residues 300–319 (ATAVAIANSCMNPILYVFMG). Topologically, residues 320-372 (HDFKKFKVALFSRLVNALSEDTGPSSYPSHRSFTKMSSLIEKASVNEKETSTL) are cytoplasmic. Ser338 carries the post-translational modification Phosphoserine. Thr341 carries the post-translational modification Phosphothreonine. Phosphoserine is present on residues Ser348, Ser351, and Ser357. Thr371 carries the phosphothreonine modification.

The protein belongs to the chemokine-like receptor (CMKLR) family. High expression in heart and lung, low in small intestines, colon, kidney, liver, uterus and brain.

The protein resides in the cell membrane. In terms of biological role, receptor for the chemoattractant adipokine chemerin/RARRES2 and for the omega-3 fatty acid derived molecule resolvin E1. Interaction with RARRES2 initiates activation of G proteins G(i)/G(o) and beta-arrestin pathways inducing cellular responses via second messenger pathways such as intracellular calcium mobilization, phosphorylation of MAP kinases MAPK1/MAPK3 (ERK1/2), TYRO3, MAPK14/P38MAPK and PI3K leading to multifunctional effects, like, reduction of immune responses, enhancing of adipogenesis and angionesis. Resolvin E1 down-regulates cytokine production in macrophages by reducing the activation of MAPK1/3 (ERK1/2) and NF-kappa-B. Positively regulates adipogenesis and adipocyte metabolism. This is Chemerin-like receptor 1 (Cmklr1) from Rattus norvegicus (Rat).